Consider the following 445-residue polypeptide: GTPase Der (445 aa).

2 EngA-type G domains span residues 3 to 167 (PVIA…YAGQ) and 180 to 353 (IKIA…AAAM). Residues 9–16 (GRPNVGKS), 56–60 (DTGGF), 119–122 (NKAE), 186–193 (GRPNVGKS), 233–237 (DTAGL), and 298–301 (NKWD) each bind GTP. In terms of domain architecture, KH-like spans 354–438 (AKLPTPKLTR…PLRIEFRSSN (85 aa)).

The protein belongs to the TRAFAC class TrmE-Era-EngA-EngB-Septin-like GTPase superfamily. EngA (Der) GTPase family. In terms of assembly, associates with the 50S ribosomal subunit.

Functionally, GTPase that plays an essential role in the late steps of ribosome biogenesis. This chain is GTPase Der, found in Burkholderia ambifaria (strain MC40-6).